Consider the following 282-residue polypeptide: Aldo-keto reductase MUL_1987 (282 aa).

Tyr-57 (proton donor) is an active-site residue. NADPH is bound by residues Leu-197, Ile-235, Ser-238, Thr-246, Asn-247, and Arg-273.

The protein belongs to the aldo/keto reductase family.

This Mycobacterium ulcerans (strain Agy99) protein is Aldo-keto reductase MUL_1987.